The primary structure comprises 286 residues: F-box/SPRY domain-containing protein 1 (286 aa).

A2 is modified (N-acetylalanine). Positions 33-82 (SGVGGRLPSRVLELVFSYLELSELRSCALVCKHWYRCLHGDENSEVWRSL) constitute an F-box domain. The B30.2/SPRY domain occupies 92–284 (LRTDILCNLP…VTLVYLGKPL (193 aa)).

This sequence belongs to the FBXO45/Fsn family. Forms a complex with MYCBP2 and SKP1. Interacts with HEY1; leading to FBXO45 nuclear translocation. Interacts (via SPRY domain) with CDH2. Expressed speciffically in the central nervous system, including cerebellum, medulla oblongata, olfactory bulb, hippocampus, cortex and brain stem.

Its subcellular location is the secreted. The protein localises to the postsynaptic cell membrane. The protein resides in the presynaptic cell membrane. It localises to the nucleus. It functions in the pathway protein modification; protein ubiquitination. Component of E3 ubiquitin ligase complex consisting of FBXO45, MYCBP2 and SKP1. Functions in substrate recognition but plays also an important role in assembly of the complex. Required for normal neuromuscular synaptogenesis, axon pathfinding and neuronal migration. Regulates neuron migration during brain development through interaction with N-cadherin/CDH2 after secretion via a non-classical mechanism. Plays a role in the regulation of neurotransmission at mature neurons. May control synaptic activity by controlling UNC13A via ubiquitin dependent pathway. Specifically recognizes TP73, promoting its ubiquitination and degradation. Polyubiquitinates NMNAT2, an adenylyltransferase that acts as an axon maintenance factor, and regulates its stability and degradation by the proteasome. Acts also by ubiquitinating FBXW7 during prolonged mitotic arrest and promotes FBXW7 proteasomal degradation. Induces subsequently an increase in mitotic slippage and prevents mitotic cell death. In response to influenza infection, mediates interferon-lambda receptor IFNLR1 polyubiquitination and degradation through the ubiquitin-proteasome system by docking with its intracellular receptor domain. This is F-box/SPRY domain-containing protein 1 from Mus musculus (Mouse).